Consider the following 145-residue polypeptide: Male-specific protein scotti (145 aa).

Residues Met-1 to Asp-34 form a disordered region. Over residues Ile-12–Asp-21 the composition is skewed to acidic residues.

It belongs to the male-specific scotti family.

In terms of biological role, post-meiotically transcribed gene that has a role in late spermiogenesis; required for actin cone progression during spermatid individualization. This is Male-specific protein scotti from Drosophila willistoni (Fruit fly).